The sequence spans 290 residues: Small ribosomal subunit protein uS2 (290 aa).

Over residues 263–282 the composition is skewed to low complexity; that stretch reads ATAGATWEAEAGGDWAAESA. A disordered region spans residues 263 to 290; that stretch reads ATAGATWEAEAGGDWAAESAQPNPETKW.

It belongs to the universal ribosomal protein uS2 family. In terms of assembly, component of the small ribosomal subunit. Mature ribosomes consist of a small (40S) and a large (60S) subunit. The 40S subunit contains about 33 different proteins and 1 molecule of RNA (18S). The 60S subunit contains about 49 different proteins and 3 molecules of RNA (25S, 5.8S and 5S). Interacts with rps21.

It is found in the cytoplasm. Its function is as follows. Required for the assembly and/or stability of the 40S ribosomal subunit. Required for the processing of the 20S rRNA-precursor to mature 18S rRNA in a late step of the maturation of 40S ribosomal subunits. The chain is Small ribosomal subunit protein uS2 (rps0) from Talaromyces stipitatus (strain ATCC 10500 / CBS 375.48 / QM 6759 / NRRL 1006) (Penicillium stipitatum).